Reading from the N-terminus, the 363-residue chain is Circumsporozoite protein (363 aa).

The N-terminal stretch at 1–22 is a signal peptide; it reads MKNFILLAVSSILLVDLLPTHF. Residues 48-57 show a composition bias toward polar residues; the sequence is GAQQVRQSAS. The segment at 48–278 is disordered; the sequence is GAQQVRQSAS…GQNNQGANAP (231 aa). The segment covering 61-96 has biased composition (basic and acidic residues); that stretch reads GLGEKPKEGADKEKKKEKGKEKEEEPKKPNENKLKQ. The required for the binding to heparan sulfate proteoglycans (HSPGs) on the surface of host hepatocytes stretch occupies residues 80–88; the sequence is KEKEEEPKK. The interval 93–97 is region I; contains the proteolytic cleavage site; that stretch reads KLKQP. A 1; approximate repeat occupies 98–109; that stretch reads NEGQPQAQGDGA. The segment at 98-241 is 12 X 12 AA approximate tandem repeats of N-A-G-Q-P-Q-A-Q-G-D-G-A; the sequence is NEGQPQAQGD…GQPQAQGDGA (144 aa). Repeat copies occupy residues 110-121, 122-133, 134-145, 146-157, 158-169, 170-181, 182-193, 194-205, 206-217, 218-229, and 230-241. Residues 248 to 259 are compositionally biased toward gly residues; it reads RNGGGAPAGGNE. Residues 260–277 are compositionally biased toward low complexity; the sequence is GNKQAGKGQGQNNQGANA. The 53-residue stretch at 289–341 folds into the TSP type-1 domain; that stretch reads KIRSSVTTEWTPCSVTCGNGVRIRRKAHAGNKKAEDLTMDDLEVEACVMDKCA. 2 disulfide bridges follow: cysteine 301-cysteine 335 and cysteine 305-cysteine 340. Threonine 304 carries O-linked (Fuc) threonine glycosylation. The GPI-anchor amidated cysteine moiety is linked to residue cysteine 340. The propeptide at 341–363 is removed in mature form; the sequence is AGIFNVVSNSLGLVILLVLALFN.

The protein belongs to the plasmodium circumsporozoite protein family. During host cell invasion, proteolytically cleaved at the cell membrane in the region I by a papain-like cysteine protease of parasite origin. Cleavage is triggered by the sporozoite contact with highly sulfated heparan sulfate proteoglycans (HSPGs) present on the host hepatocyte cell surface. Cleavage exposes the TSP type-1 (TSR) domain and is required for productive invasion of host hepatocytes but not for adhesion to the host cell membrane. Cleavage is dispensable for sporozoite development in the oocyst, motility and for traversal of host and vector cells. In terms of processing, O-glycosylated; maybe by POFUT2.

It is found in the cell membrane. The protein resides in the cytoplasm. Essential sporozoite protein. In the mosquito vector, required for sporozoite development in the oocyst, migration through the vector hemolymph and entry into the vector salivary glands. In the vertebrate host, required for sporozoite migration through the host dermis and infection of host hepatocytes. Binds to highly sulfated heparan sulfate proteoglycans (HSPGs) on the surface of host hepatocytes. Functionally, in the vertebrate host, binds to highly sulfated heparan sulfate proteoglycans (HSPGs) on the surface of host hepatocytes and is required for sporozoite invasion of the host hepatocytes. The polypeptide is Circumsporozoite protein (Plasmodium knowlesi (strain H)).